The following is a 362-amino-acid chain: Peptide chain release factor 1 (362 aa).

The residue at position 235 (glutamine 235) is an N5-methylglutamine.

It belongs to the prokaryotic/mitochondrial release factor family. Post-translationally, methylated by PrmC. Methylation increases the termination efficiency of RF1.

The protein resides in the cytoplasm. In terms of biological role, peptide chain release factor 1 directs the termination of translation in response to the peptide chain termination codons UAG and UAA. The polypeptide is Peptide chain release factor 1 (Acinetobacter baumannii (strain ACICU)).